We begin with the raw amino-acid sequence, 188 residues long: Pterocarpan synthase 1 (188 aa).

Positions 1–23 (MAKSTTFFISLTLPFLLLSVVTA) are cleaved as a signal peptide. N127 is a glycosylation site (N-linked (GlcNAc...) asparagine).

This sequence belongs to the plant dirigent protein family. Homodimer.

The protein resides in the secreted. It is found in the extracellular space. Its subcellular location is the apoplast. The enzyme catalyses a (4R)-4,2'-dihydroxyisoflavan = a pterocarpan + H2O.. It catalyses the reaction (3R,4R)-7,2'-dihydroxy-4'-methoxyisoflavanol = (-)-medicarpin + H2O. It carries out the reaction (3S,4R)-7,2'-dihydroxy-4'-methoxyisoflavanol = (+)-medicarpin + H2O. The catalysed reaction is (3R,4R)-3-(6-hydroxy-1,3-benzodioxol-5-yl)-3,4-dihydro-2H-chromene-4,7-diol = (-)-maackiain + H2O. The enzyme catalyses (3R,4R)-7,2',4'-trihydroxyisoflavanol = (6aR,11aR)-3,9-dihydroxypterocarpan + H2O. Functionally, involved in pterocarpan phytoalexin biosynthesis. Catalyzes the last step in the biosynthesis of the phytoalexin medicarpin, and thereby contributes to plant defense reactions. Dirigent proteins impart stereoselectivity on the phenoxy radical-coupling reaction, yielding optically active lignans from two molecules of coniferyl alcohol in the biosynthesis of lignans, flavonolignans, and alkaloids and thus plays a central role in plant secondary metabolism. The protein is Pterocarpan synthase 1 of Glycyrrhiza echinata (Licorice).